The primary structure comprises 867 residues: Envelope glycoprotein gp160 (867 aa).

The first 31 residues, 1 to 31 (MRVKGIRKNYQHLWRWGTMLLGILMICSAAE), serve as a signal peptide directing secretion. Residues 32–695 (QLWVTVYYGV…ITNWLWYIRI (664 aa)) are Extracellular-facing. C53 and C73 are disulfide-bonded. N-linked (GlcNAc...) asparagine; by host glycans are attached at residues N87, N135, N140, N143, N159, N163, N188, N189, N199, N209, N246, N253, N274, N288, and N307. Intrachain disulfides connect C118-C217, C125-C208, C130-C160, C230-C259, and C240-C251. Positions 130–159 (CIDWGNDTSPNATNTTSSGGEKMEKGEMKN) are V1. A V2 region spans residues 160–208 (CSFNITTSIRDKVQKEHALFYKHDVVPINNSTKDNIKNDNSTRYRLISC). Residues 308–341 (CTRPSKTTRRRIHIGPGRAFYTTKQIAGDLRQAH) form a V3 region. C308 and C342 form a disulfide bridge. N-linked (GlcNAc...) asparagine; by host glycans are attached at residues N350, N366, and N372. A CD4-binding loop region spans residues 374-384 (SSGGDPEIVMH). 2 disulfide bridges follow: C388/C457 and C395/C430. A V4 region spans residues 395 to 430 (CNSTQLFNSTWLSNSTWNDTEGSNNTGGNDTITLPC). 8 N-linked (GlcNAc...) asparagine; by host glycosylation sites follow: N396, N402, N408, N412, N418, N423, N460, and N475. 2 V5 regions span residues 473–483 (NQNETETFRPG) and 475–483 (NETETFRPG). The segment at 524–544 (AVGIGAVFLGFLGAAGSTMGA) is fusion peptide. Residues 585–603 (KQLQARILAVERYLKDQQL) are immunosuppression. C609 and C615 form a disulfide bridge. N-linked (GlcNAc...) asparagine; by host glycosylation is found at N622, N627, N636, and N648. The stretch at 644 to 678 (REIDNYTSLIYTLIEESQNQQEKNEQELLGLDKWA) forms a coiled coil. Residues 673–694 (GLDKWASLWNWFTITNWLWYIR) are MPER; binding to GalCer. Residues 696–716 (FIMIVGGLVGLRIVFTVLSIV) form a helical membrane-spanning segment. The Cytoplasmic portion of the chain corresponds to 717–867 (NRVRQGYSPL…IRQGLERALL (151 aa)). The YXXL motif; contains endocytosis signal motif lies at 723–726 (YSPL). The disordered stretch occupies residues 730–755 (TRLPAPRGPDRPEGIEEEGGDRDRDR). C775 carries S-palmitoyl cysteine; by host lipidation. The Di-leucine internalization motif signature appears at 866–867 (LL).

Belongs to the HIV-1 env protein family. The mature envelope protein (Env) consists of a homotrimer of non-covalently associated gp120-gp41 heterodimers. The resulting complex protrudes from the virus surface as a spike. There seems to be as few as 10 spikes on the average virion. Interacts with host CD4, CCR5 and CXCR4. Gp120 also interacts with the C-type lectins CD209/DC-SIGN and CLEC4M/DC-SIGNR (collectively referred to as DC-SIGN(R)). Gp120 and gp41 interact with GalCer. Gp120 interacts with host ITGA4/ITGB7 complex; on CD4+ T-cells, this interaction results in rapid activation of integrin ITGAL/LFA-1, which facilitates efficient cell-to-cell spreading of HIV-1. Gp120 interacts with cell-associated heparan sulfate; this interaction increases virus infectivity on permissive cells and may be involved in infection of CD4- cells. In terms of assembly, the mature envelope protein (Env) consists of a homotrimer of non-covalently associated gp120-gp41 heterodimers. The resulting complex protrudes from the virus surface as a spike. There seems to be as few as 10 spikes on the average virion. Post-translationally, highly glycosylated by host. The high number of glycan on the protein is reffered to as 'glycan shield' because it contributes to hide protein sequence from adaptive immune system. In terms of processing, palmitoylation of the transmembrane protein and of Env polyprotein (prior to its proteolytic cleavage) is essential for their association with host cell membrane lipid rafts. Palmitoylation is therefore required for envelope trafficking to classical lipid rafts, but not for viral replication. Specific enzymatic cleavages in vivo yield mature proteins. Envelope glycoproteins are synthesized as an inactive precursor that is heavily N-glycosylated and processed likely by host cell furin in the Golgi to yield the mature SU and TM proteins. The cleavage site between SU and TM requires the minimal sequence [KR]-X-[KR]-R. About 2 of the 9 disulfide bonds of gp41 are reduced by P4HB/PDI, following binding to CD4 receptor.

Its subcellular location is the virion membrane. It is found in the host cell membrane. The protein resides in the host endosome membrane. Functionally, oligomerizes in the host endoplasmic reticulum into predominantly trimers. In a second time, gp160 transits in the host Golgi, where glycosylation is completed. The precursor is then proteolytically cleaved in the trans-Golgi and thereby activated by cellular furin or furin-like proteases to produce gp120 and gp41. In terms of biological role, attaches the virus to the host lymphoid cell by binding to the primary receptor CD4. This interaction induces a structural rearrangement creating a high affinity binding site for a chemokine coreceptor like CXCR4 and/or CCR5. Acts as a ligand for CD209/DC-SIGN and CLEC4M/DC-SIGNR, which are respectively found on dendritic cells (DCs), and on endothelial cells of liver sinusoids and lymph node sinuses. These interactions allow capture of viral particles at mucosal surfaces by these cells and subsequent transmission to permissive cells. HIV subverts the migration properties of dendritic cells to gain access to CD4+ T-cells in lymph nodes. Virus transmission to permissive T-cells occurs either in trans (without DCs infection, through viral capture and transmission), or in cis (following DCs productive infection, through the usual CD4-gp120 interaction), thereby inducing a robust infection. In trans infection, bound virions remain infectious over days and it is proposed that they are not degraded, but protected in non-lysosomal acidic organelles within the DCs close to the cell membrane thus contributing to the viral infectious potential during DCs' migration from the periphery to the lymphoid tissues. On arrival at lymphoid tissues, intact virions recycle back to DCs' cell surface allowing virus transmission to CD4+ T-cells. Acts as a class I viral fusion protein. Under the current model, the protein has at least 3 conformational states: pre-fusion native state, pre-hairpin intermediate state, and post-fusion hairpin state. During fusion of viral and target intracellular membranes, the coiled coil regions (heptad repeats) assume a trimer-of-hairpins structure, positioning the fusion peptide in close proximity to the C-terminal region of the ectodomain. The formation of this structure appears to drive apposition and subsequent fusion of viral and target cell membranes. Complete fusion occurs in host cell endosomes and is dynamin-dependent, however some lipid transfer might occur at the plasma membrane. The virus undergoes clathrin-dependent internalization long before endosomal fusion, thus minimizing the surface exposure of conserved viral epitopes during fusion and reducing the efficacy of inhibitors targeting these epitopes. Membranes fusion leads to delivery of the nucleocapsid into the cytoplasm. The sequence is that of Envelope glycoprotein gp160 from Homo sapiens (Human).